A 334-amino-acid chain; its full sequence is Phosphate acyltransferase (334 aa).

It belongs to the PlsX family. In terms of assembly, homodimer. Probably interacts with PlsY.

Its subcellular location is the cytoplasm. It carries out the reaction a fatty acyl-[ACP] + phosphate = an acyl phosphate + holo-[ACP]. Its pathway is lipid metabolism; phospholipid metabolism. Catalyzes the reversible formation of acyl-phosphate (acyl-PO(4)) from acyl-[acyl-carrier-protein] (acyl-ACP). This enzyme utilizes acyl-ACP as fatty acyl donor, but not acyl-CoA. The protein is Phosphate acyltransferase of Clostridium tetani (strain Massachusetts / E88).